The chain runs to 91 residues: UPF0298 protein spyM18_0447 (91 aa).

Belongs to the UPF0298 family.

Its subcellular location is the cytoplasm. This Streptococcus pyogenes serotype M18 (strain MGAS8232) protein is UPF0298 protein spyM18_0447.